Here is a 134-residue protein sequence, read N- to C-terminus: ATP synthase epsilon chain (134 aa).

The protein belongs to the ATPase epsilon chain family. As to quaternary structure, F-type ATPases have 2 components, CF(1) - the catalytic core - and CF(0) - the membrane proton channel. CF(1) has five subunits: alpha(3), beta(3), gamma(1), delta(1), epsilon(1). CF(0) has three main subunits: a, b and c.

Its subcellular location is the cell membrane. In terms of biological role, produces ATP from ADP in the presence of a proton gradient across the membrane. The sequence is that of ATP synthase epsilon chain from Ruminiclostridium cellulolyticum (strain ATCC 35319 / DSM 5812 / JCM 6584 / H10) (Clostridium cellulolyticum).